A 437-amino-acid chain; its full sequence is Double-stranded RNA-binding protein 3 (437 aa).

A disordered region spans residues 1–22; sequence MKKKSAPTPLPPETANTSPAPI. DRBM domains lie at 35–104 and 120–187; these read VFKS…EIVK and LCKN…AIQG. Basic and acidic residues-rich tracts occupy residues 288 to 310 and 320 to 330; these read AKRV…ENQH and DEARVEQEPSR. The interval 288-331 is disordered; that stretch reads AKRVEDEPPRDIEMVQPDKENQHSDAALVQPDDEARVEQEPSRD.

Its function is as follows. Binds double-stranded RNA. The polypeptide is Double-stranded RNA-binding protein 3 (DRB3) (Oryza sativa subsp. japonica (Rice)).